The following is a 101-amino-acid chain: MSETEREDERWTPPIGPIDPEHPECAAVIAEVWTLLDGECTPETRDKLKQHLEECPTCLRHYGIEERVKRLIAAKCSGEKAPDSLRERLRIQISRTTIIRG.

Positions 1-20 (MSETEREDERWTPPIGPIDP) are disordered. Iron-sulfur cluster contacts are provided by Cys-25, His-51, Cys-55, and Cys-58. Thr-96 bears the Phosphothreonine mark.

The protein belongs to the zinc-associated anti-sigma factor (ZAS) superfamily. As to quaternary structure, interacts with cognate ECF RNA polymerase sigma factor SigH under reducing conditions; the complex is disrupted under oxiding conditions or as temperatures rise. Binding inhibits the interaction of SigH with the RNA polymerase catalytic core. The cofactor is iron-sulfur cluster. Phosphorylated, probably by PknB. Phosphorylation decreases interaction with SigH, probably leading to increased SigH-mediated transcription.

Its function is as follows. A redox-regulated anti-sigma factor for cognate extracytoplasmic function (ECF) sigma factor SigH. ECF sigma factors are held in an inactive form by an anti-sigma factor. Overexpression leads to increased susceptibility to diamide. In Mycolicibacterium smegmatis (strain ATCC 700084 / mc(2)155) (Mycobacterium smegmatis), this protein is Anti-sigma factor RshA (rshA).